The chain runs to 277 residues: Methylamine utilization protein MauF (277 aa).

7 helical membrane-spanning segments follow: residues 33-53 (IAVL…LASA), 59-79 (LWAV…WSPC), 111-131 (YGLG…IAGF), 132-152 (SGFG…YGAH), 179-199 (WVIG…YVQT), 205-225 (MTLA…VALF), and 257-277 (ALAD…LALI).

Its subcellular location is the cell membrane. The protein operates within one-carbon metabolism; methylamine degradation. This chain is Methylamine utilization protein MauF (mauF), found in Paracoccus denitrificans.